Consider the following 83-residue polypeptide: Cytochrome b559 subunit alpha (83 aa).

Residues 21–35 traverse the membrane as a helical segment; that stretch reads IIHSITIPSLFIAGW. Histidine 23 serves as a coordination point for heme.

As to quaternary structure, heterodimer of an alpha subunit and a beta subunit. PSII is composed of 1 copy each of membrane proteins PsbA, PsbB, PsbC, PsbD, PsbE, PsbF, PsbH, PsbI, PsbJ, PsbK, PsbL, PsbM, PsbT, PsbX, PsbY, PsbZ, Psb30/Ycf12, at least 3 peripheral proteins of the oxygen-evolving complex and a large number of cofactors. It forms dimeric complexes. The cofactor is heme b.

The protein localises to the plastid. It localises to the chloroplast thylakoid membrane. Its function is as follows. This b-type cytochrome is tightly associated with the reaction center of photosystem II (PSII). PSII is a light-driven water:plastoquinone oxidoreductase that uses light energy to abstract electrons from H(2)O, generating O(2) and a proton gradient subsequently used for ATP formation. It consists of a core antenna complex that captures photons, and an electron transfer chain that converts photonic excitation into a charge separation. The chain is Cytochrome b559 subunit alpha from Pisum sativum (Garden pea).